The following is a 283-amino-acid chain: 5'-nucleotidase SurE (283 aa).

The a divalent metal cation site is built by D14, D15, S47, and N105.

The protein belongs to the SurE nucleotidase family. Requires a divalent metal cation as cofactor.

Its subcellular location is the cytoplasm. The catalysed reaction is a ribonucleoside 5'-phosphate + H2O = a ribonucleoside + phosphate. In terms of biological role, nucleotidase that shows phosphatase activity on nucleoside 5'-monophosphates. The sequence is that of 5'-nucleotidase SurE from Chlamydia trachomatis serovar D (strain ATCC VR-885 / DSM 19411 / UW-3/Cx).